The chain runs to 112 residues: CENP-A recruiting complex protein mis19 (112 aa).

In terms of assembly, component of the CENP-A recruiting complex composed of at least mis16, mis19, mis19 and mis20.

It is found in the chromosome. The protein localises to the centromere. Its subcellular location is the kinetochore. Component of the CENP-A recruiting complex that ensures the integrity of mitotic spindles through maintenance of kinetochore factors mis6/CENP-I and cnp1/CENP-A. Links mis16 and mis18 to recruit CENP-A through interacting with non-sense-mediated mRNA decay (NMD) factors and the SWI/SNF complex. Also links mis18 with the CCAN/mis6/ctf19 complex to promote CENP-A assembly. The protein is CENP-A recruiting complex protein mis19 of Schizosaccharomyces pombe (strain 972 / ATCC 24843) (Fission yeast).